Consider the following 150-residue polypeptide: 3-hydroxyacyl-[acyl-carrier-protein] dehydratase FabZ (150 aa).

The active site involves H53.

It belongs to the thioester dehydratase family. FabZ subfamily.

The protein resides in the cytoplasm. The catalysed reaction is a (3R)-hydroxyacyl-[ACP] = a (2E)-enoyl-[ACP] + H2O. Involved in unsaturated fatty acids biosynthesis. Catalyzes the dehydration of short chain beta-hydroxyacyl-ACPs and long chain saturated and unsaturated beta-hydroxyacyl-ACPs. The polypeptide is 3-hydroxyacyl-[acyl-carrier-protein] dehydratase FabZ (Proteus mirabilis (strain HI4320)).